Reading from the N-terminus, the 847-residue chain is E4 SUMO-protein ligase PIAL1 (847 aa).

An interacting domain (IND), required for interaction with MOM1 and PIAL2 region spans residues 113 to 271 (VNSPVTLISQ…EVVGSNSDCD (159 aa)). The SP-RING-type zinc-finger motif lies at 268 to 349 (SDCDIIEGPS…LRKILEEVGR (82 aa)). The Zn(2+) site is built by Cys-299, His-301, Cys-322, and Cys-325. 7 consecutive repeat copies span residues 569–591 (QRPV…ENAD), 592–614 (QRWM…GNTN), 615–637 (QRPI…GNTD), 638–659 (HRST…GNAD), 660–682 (QRPM…GYAH), 683–705 (QRPM…GTPD), and 706–728 (QRPM…GTTD). A 7 X 23 AA approximate tandem repeats region spans residues 569–728 (QRPVPSYIAH…LPVSYGGTTD (160 aa)).

The protein belongs to the PIAL protein ligase family. Homodimer. Interacts with MOM1 and PIAL2 to form a high molecular mass complex which mediates transcriptional gene silencing at heterochromatin regions. In terms of tissue distribution, expressed in leaves, stems and flowers, and, at low levels, in siliques and old leaves.

The protein localises to the nucleus. It participates in protein modification; protein sumoylation. Together with MOM1 and PIAL2, regulates transcriptional gene silencing (TGS) independently of changes in DNA methylation. E4-type SUMO ligase that promotes SUMO chain formation in a SCE1-dependent manner and thus contributes to a pathway for proteolytic removal of sumoylation substrates. Involved in stress responses (e.g. osmotic, salt and abscisic acid ABA) and sulfur metabolism. The chain is E4 SUMO-protein ligase PIAL1 from Arabidopsis thaliana (Mouse-ear cress).